Reading from the N-terminus, the 1169-residue chain is Transcription-repair-coupling factor (1169 aa).

Residues 634–795 (DMERARPMDR…MLGVRDLSVI (162 aa)) form the Helicase ATP-binding domain. An ATP-binding site is contributed by 647 to 654 (GDVGYGKT). The DEEQ box motif lies at 748–751 (DEEQ). Residues 809–970 (VLEQNTNFIK…GFKIAMRDLN (162 aa)) form the Helicase C-terminal domain.

In the N-terminal section; belongs to the UvrB family. The protein in the C-terminal section; belongs to the helicase family. RecG subfamily.

The protein resides in the cytoplasm. Its function is as follows. Couples transcription and DNA repair by recognizing RNA polymerase (RNAP) stalled at DNA lesions. Mediates ATP-dependent release of RNAP and its truncated transcript from the DNA, and recruitment of nucleotide excision repair machinery to the damaged site. The chain is Transcription-repair-coupling factor from Staphylococcus epidermidis (strain ATCC 12228 / FDA PCI 1200).